A 206-amino-acid chain; its full sequence is Large ribosomal subunit protein uL4 (206 aa).

Polar residues predominate over residues 42–54; that stretch reads RRQQGTHQSQGRS. Residues 42–94 form a disordered region; that stretch reads RRQQGTHQSQGRSDVSRTGAKMFKQKGTGRARHSSARAPQFRGGGKAHGPVFR. Residues 64-76 are compositionally biased toward basic residues; the sequence is FKQKGTGRARHSS.

Belongs to the universal ribosomal protein uL4 family. Part of the 50S ribosomal subunit.

One of the primary rRNA binding proteins, this protein initially binds near the 5'-end of the 23S rRNA. It is important during the early stages of 50S assembly. It makes multiple contacts with different domains of the 23S rRNA in the assembled 50S subunit and ribosome. In terms of biological role, forms part of the polypeptide exit tunnel. This chain is Large ribosomal subunit protein uL4, found in Bartonella tribocorum (strain CIP 105476 / IBS 506).